The chain runs to 109 residues: Cell division protein ZapA (109 aa).

A coiled-coil region spans residues 21-99 (PEQRDALNQA…IEQALLEQGR (79 aa)).

It belongs to the ZapA family. Type 1 subfamily. As to quaternary structure, homodimer. Interacts with FtsZ.

It localises to the cytoplasm. Functionally, activator of cell division through the inhibition of FtsZ GTPase activity, therefore promoting FtsZ assembly into bundles of protofilaments necessary for the formation of the division Z ring. It is recruited early at mid-cell but it is not essential for cell division. This chain is Cell division protein ZapA, found in Klebsiella pneumoniae subsp. pneumoniae (strain ATCC 700721 / MGH 78578).